Reading from the N-terminus, the 172-residue chain is Bone marrow stromal antigen 2 (172 aa).

Topologically, residues 1-26 are cytoplasmic; sequence MAPSFYHYLPVAMDERWEPKGWSIRR. Lys-20 is covalently cross-linked (Glycyl lysine isopeptide (Lys-Gly) (interchain with G-Cter in ubiquitin)). Residues 27 to 47 traverse the membrane as a helical; Signal-anchor for type II membrane protein segment; it reads WWLVAAILVVLIGVVLVCLIV. Residues 48–152 are Extracellular-facing; it reads YFANAAHSEA…EISTTVQVNS (105 aa). Residues Asn-70 and Asn-97 are each glycosylated (N-linked (GlcNAc...) asparagine). Residues 103–149 adopt a coiled-coil conformation; it reads LRDSLKKKVSQTQEQQARIKELENKIERLNQELENLRTQKEISTTVQ. Ser-152 carries the GPI-anchor amidated serine lipid modification. The propeptide at 153–172 is removed in mature form; it reads GGSVVVSSLLVLVAVLFLHF.

In terms of assembly, parallel homodimer; disulfide-linked. May form homotetramers under reducing conditions. Isoform 1 and isoform 2 form homodimers and also heterodimers with each other. Dimerization is essential for its antiviral activity. Interacts (via cytoplasmic domain) with ARHGAP44. Interacts with MMP14 (via C-terminal cytoplasmic tail). Interacts with LILRA4/ILT7. Interacts with RNF115. N-glycosylated. In terms of processing, the GPI anchor is essential for its antiviral activity. Ubiquitously expressed, with highest levels in brain and liver. Present in liver (at protein level).

Its subcellular location is the golgi apparatus. The protein resides in the trans-Golgi network. It localises to the cell membrane. It is found in the late endosome. The protein localises to the membrane raft. Its subcellular location is the cytoplasm. The protein resides in the apical cell membrane. In terms of biological role, IFN-induced antiviral host restriction factor which efficiently blocks the release of diverse mammalian enveloped viruses by directly tethering nascent virions to the membranes of infected cells. Acts as a direct physical tether, holding virions to the cell membrane and linking virions to each other. The tethered virions can be internalized by endocytosis and subsequently degraded or they can remain on the cell surface. In either case, their spread as cell-free virions is restricted. Its target viruses belong to diverse families, including retroviridae: human immunodeficiency virus type 1 (HIV-1), mouse mammary tumor virus (MMTV) and murine leukemia virus (MLV), filoviridae: ebola virus (EBOV), arenaviridae: lassa virus (LASV), and rhabdoviridae: vesicular stomatitis virus (VSV). Can inhibit cell surface proteolytic activity of MMP14 causing decreased activation of MMP15 which results in inhibition of cell growth and migration. Can stimulate signaling by LILRA4/ILT7 and consequently provide negative feedback to the production of IFN by plasmacytoid dendritic cells in response to viral infection. Plays a role in the organization of the subapical actin cytoskeleton in polarized epithelial cells. This chain is Bone marrow stromal antigen 2 (Bst2), found in Rattus norvegicus (Rat).